The primary structure comprises 853 residues: Bromodomain-containing protein bet-1 (853 aa).

The span at 1–19 (MSEGSGDQSQQRPWASPRQ) shows a compositional bias: polar residues. Disordered regions lie at residues 1–22 (MSEGSGDQSQQRPWASPRQQPI) and 141–245 (SLEQ…LRAK). In terms of domain architecture, Bromo 1 spans 39-145 (RHTNKLDYIM…EVIKKSLEQA (107 aa)). Over residues 141–153 (SLEQAPREEHDMD) the composition is skewed to basic and acidic residues. Low complexity-rich tracts occupy residues 166 to 175 (SDGGSKSSSS) and 192 to 215 (SEVSSVTTASAAAPTVSESASVAA). Lys-252 participates in a covalent cross-link: Glycyl lysine isopeptide (Lys-Gly) (interchain with G-Cter in SUMO). The Bromo 2 domain maps to 257-366 (QPLLPSMKPC…EVFDRRWAEL (110 aa)). The segment covering 369-381 (SSSRASSVAPQSA) has biased composition (low complexity). The segment at 369 to 418 (SSSRASSVAPQSAPIAPTPKVAKSSAPKEPKESRKEHKKETTFEASGAKS) is disordered. Over residues 394-410 (APKEPKESRKEHKKETT) the composition is skewed to basic and acidic residues. Residues 419 to 458 (EDLMQINNALSMIREREEKLKAELAAAQAIKDKLTSVKNR) adopt a coiled-coil conformation. Positions 516 to 601 (DSDDEDNKMA…TIPTLNGNGD (86 aa)) constitute an NET domain. Disordered stretches follow at residues 594 to 814 (PTLN…DEQT) and 819 to 838 (MRMEAKRARQKEDEGSVSLS). Residues 612 to 624 (TSSGATGSKGSSS) show a composition bias toward low complexity. Residues 684–696 (QPPSTSREWNQSS) show a composition bias toward polar residues. Residues 708–736 (QPPMSRVPASSSTSVSAIGKNNAAASSNS) are compositionally biased toward low complexity. Over residues 786-807 (QFFQSQPTTSATIRSPTESQPG) the composition is skewed to polar residues. A compositionally biased stretch (basic and acidic residues) spans 819 to 832 (MRMEAKRARQKEDE).

It belongs to the BET family. In terms of assembly, interacts with acetylated histone H4. Interacts (via BROMO domain 2) with smo-1 and ubc-9. As to expression, expressed in T-cells, Q-cells, V5-cells and their descendants such as somatic gonad and syncytium.

It is found in the nucleus. It localises to the chromosome. Its function is as follows. Required for the establishment and maintenance of stable cell fate in several lineages including V5.pa, T, Z1/Z4 and QR lineages probably by repressing the expression of cell fate determinants. Required to maintain non-distal tip cell (DTC) fate of somatic gonadal cells through the htz-1-mediated repression of transcription factor ceh-22. Regulates the subnuclear localization of histone variant htz-1 in somatic gonadal cells. Plays a role in the attenuation of the let-60/ras pathway, probably by preventing expression of activators of the pathway. Involved in adult locomotion. Acts together with the sumoylation pathway to prevent muscle myosin depletion in aging adults probably by preventing myoblast growth factor receptor egl-15 overexpression. May play a role in vulva development. The protein is Bromodomain-containing protein bet-1 of Caenorhabditis elegans.